The following is a 330-amino-acid chain: Nuclear apoptosis-inducing factor 1 (330 aa).

Residues 1–74 (MASPPAPPAK…CHRELPEVKK (74 aa)) form a required for nuclear localization and apoptosis-inducing activity region. 3 disordered regions span residues 92 to 117 (AAMEGGGESQNGGGAGTEGEDPTGAT), 147 to 175 (CGAGRRDRDPHHRLRHHRHADPGVSAAPS), and 309 to 330 (NTPSPSVTADPNQTGQQDGIIQ). The segment covering 95–108 (EGGGESQNGGGAGT) has biased composition (gly residues).

It belongs to the NAIF1 family.

The protein localises to the nucleus. Its function is as follows. Induces apoptosis. The protein is Nuclear apoptosis-inducing factor 1 (NAIF1) of Gallus gallus (Chicken).